A 359-amino-acid polypeptide reads, in one-letter code: 3-dehydroquinate synthase (359 aa).

NAD(+) contacts are provided by residues aspartate 71 to lysine 76, glycine 105 to aspartate 109, threonine 129 to threonine 130, lysine 142, and lysine 151. 3 residues coordinate Zn(2+): glutamate 184, histidine 247, and histidine 264.

This sequence belongs to the sugar phosphate cyclases superfamily. Dehydroquinate synthase family. It depends on Co(2+) as a cofactor. Zn(2+) serves as cofactor. NAD(+) is required as a cofactor.

The protein localises to the cytoplasm. The enzyme catalyses 7-phospho-2-dehydro-3-deoxy-D-arabino-heptonate = 3-dehydroquinate + phosphate. The protein operates within metabolic intermediate biosynthesis; chorismate biosynthesis; chorismate from D-erythrose 4-phosphate and phosphoenolpyruvate: step 2/7. Functionally, catalyzes the conversion of 3-deoxy-D-arabino-heptulosonate 7-phosphate (DAHP) to dehydroquinate (DHQ). This Burkholderia cenocepacia (strain HI2424) protein is 3-dehydroquinate synthase.